Here is a 185-residue protein sequence, read N- to C-terminus: Ribosome-recycling factor (185 aa).

The protein belongs to the RRF family.

It is found in the cytoplasm. Its function is as follows. Responsible for the release of ribosomes from messenger RNA at the termination of protein biosynthesis. May increase the efficiency of translation by recycling ribosomes from one round of translation to another. This is Ribosome-recycling factor from Exiguobacterium sibiricum (strain DSM 17290 / CCUG 55495 / CIP 109462 / JCM 13490 / 255-15).